The sequence spans 499 residues: MVIKVPYVTAATTLFSFGLIFGFGHLRDSFRALLRLLFSSAAAADSPAGCNSKGYAPICVGKEDFYIRRFFRRVQDCFGRPIASKPDAWFDVVERYSTDSNKTLHCTTKTSKCLNLASFNYLGFAAADEYCTPRVIESLKKYSASTCSSRVDGGNTQLHIELEELVARFVRKPSAILLAMGYATNSAIIPALIGKGGLIISDSLNHNSIVSGARASGATIRVFEHNNPAHLEKLLREQISGGQPRTHRAWKKILVIVEGIYSMEGELCKLPEIISVCKKYKVYTYMDEAHSIGAVGKTGRGVCELLGVDPADVDIMMGTLSKSFGSSGGYIAASKEIIQHLKLTCPSHIYGTSMSPPAVQQVISAMKVILGEDGTDRGAKKIAQIRDNSNFFRSELQKMGFEVLGDNDSPVMPFMVYNPAKMPAFSRECLKQNVAVVPVGFPATPLLLGRIRICISASHSREDLIKGLEVISNVGDLVGIKYLPVEQEETTSVEKPKKL.

A helical transmembrane segment spans residues 5 to 25 (VPYVTAATTLFSFGLIFGFGH). Lys-322 is modified (N6-(pyridoxal phosphate)lysine).

This sequence belongs to the class-II pyridoxal-phosphate-dependent aminotransferase family. As to quaternary structure, heterodimer with LCB1. Component of the serine palmitoyltransferase (SPT) complex, composed of LCB1 and LCB2. Pyridoxal 5'-phosphate is required as a cofactor.

It localises to the endoplasmic reticulum membrane. It catalyses the reaction L-serine + hexadecanoyl-CoA + H(+) = 3-oxosphinganine + CO2 + CoA. Its pathway is lipid metabolism; sphingolipid metabolism. In terms of biological role, serine palmitoyltransferase (SPT). The heterodimer formed with LCB1 constitutes the catalytic core. The sequence is that of Long chain base biosynthesis protein 2b from Oryza sativa subsp. japonica (Rice).